The chain runs to 199 residues: Probable molybdenum cofactor guanylyltransferase (199 aa).

Residues 8-10 (LAG), lysine 20, aspartate 65, and aspartate 96 each bind GTP. Residue aspartate 96 participates in Mg(2+) binding.

Belongs to the MobA family. Requires Mg(2+) as cofactor.

The protein resides in the cytoplasm. It carries out the reaction Mo-molybdopterin + GTP + H(+) = Mo-molybdopterin guanine dinucleotide + diphosphate. Its function is as follows. Transfers a GMP moiety from GTP to Mo-molybdopterin (Mo-MPT) cofactor (Moco or molybdenum cofactor) to form Mo-molybdopterin guanine dinucleotide (Mo-MGD) cofactor. This chain is Probable molybdenum cofactor guanylyltransferase, found in Bacillus subtilis (strain 168).